The sequence spans 3078 residues: MTENIHNNSTYNNKLIRDRNDYDDVDGSGDVAVIGIGLRFPSGNLKESISKPNQLFNELLNGLDGIVTTSERWSDNYYLNGEIVSKFAGLLPLDEWKQFDPIFFAINPSNDNVSSIDPQQRLLLKCVWEALEDSGIDPISLRGTNTSTFIGSSTIDYNDLQRSPLETQNNIFGSTTHSIANRIGYCFDFRGENLTIDTACSSSSNAINCGYNSIKSNKSNVSIVGGVNFILDPHISKSFTKLDMLSPTGRCHTFSSDADGYVRSEGVGIVVLKKLKDAIKDSNNIYCVIKGSNSNIDGNFDKLNFYSPSKSSQYENIKLAIKSTNGQINESDIDYCETHGTGTPTGDPIELEGISRVFNNKASTTTLINNNKQVLVGSIKSNIGHTEACSGVASLIKCCLMFKNKLFLQNINFKEPNPLINFKEWGLKVVTEPIKFNENKSTVMLLNNFGVTGSNVCLILSEFYGNQFSYNKSNSYHKIKIDNKFNEKKKYLIPLSSNSSTSLNNYKSSIIKHSNSSSTTTSFKEFVHNQIKFKSTSLIQKSVIIASDWNEFQDENNQIKLENSDNLISNITVEKKKSPITVMVLCGQGSQYNKMASSLYDNEPIFRESVNRFDKELFKYYGYSVLDKLRSIDDKDLISIHQPILAQPANVIIQVSLYELYKHWGVSADIIIGHSLGEISSSYCSGIIDFQTLCYLTYHRSVAQNRTIGTGRMLSVNISSDEFINKYQSTTKYESLEIACYNSPTSIVISGNEDLLNEITNEFKSNDIFCTMLGLLSSFHTSSQQMIKDEVCSLNISSKQPSIAVFSTVTTNLFNHQSSPFNADYVFNNIRQPVRFTQTITNLYKHIESNDMGNEITFIEVSPHPTLQYYLNQMKSTQSSYFNNGKNITIYSPLNKKKNDYNEFLKTISLLYVNNNFDINFKSQLINNNNTNQLNNLPLYQWDDKEYFKINSFHEKIKNEGPSIHSLGNNTDSPYPSYQTFIDIKKLPFQWLKGHQVSDKFYYPGMGYVLNLLSIYPNQDITIGSLEFKSPLVLTEGNNQCLQTTIAPLSKNEFNIKSHYKDQKTNQWILSSLGNFSLTKHNIENNEPINIQSLKDKCNFTSISKQDLYETIRIKTNLTYKGLFQGVKQCHIGSNCSLTIVSLNEIYNQKEYNHLLNNSIMDTFFNTAILDTCLHGVLVAVTQPIVLDRIEAFKFYSSNYPSFNNNNNSNNNDTIKELYVYSEIRARTNSQTYSGSIKIILPNGTLLVDIGNVVCTIVGSNPDSTIICKPPSNEIYTPYLQSKDSMINKPEQFKHLYRVDEFSVKEEGNRFISKGLLPSLFYKHINKRCPSINLESLTTLEYDQFKQLYYDNSLANENLFKFIFEVLKKFQNNPNINNNNNNNNNNNNNNNNNSNGYNNYENLYIRATKVMAKQLFPLKDDDSITDTPQSLFESGYLDEFYKNSNVIKPSNNLLSEIIVETLKPILNEPIVFRILEAGGGTGSLSLLILEKICKLLNDNSTTSIINIEFTWSDVSASFFAEIKENFSSFTNHNNLNIIYRVLDLEKPLLDQDLKASYYDFVVMSNVMHVVKKLKPTLNEIHNILTPNGQLLFIEPPYKSFYFDSIFGCFSQWWPSSDSDIELRPDRCCMKQEKWINLLNQCNYRDTIMSGNDNLVFLIQTRKPTINEIISEQSISLDQLNSFNNIILFSSNSNNIRNINSYKNDICSSSIQNLIRLNQELKHKIVNISNYNEFQSWITNYQNKDDCNKTLIIFLKSIESTMNTFNFKEITFEYIQINQLILKLELSNNFKHLLLSLNSTTDNYLSSSIIGAARYFVEFPQLDLLTLNYDNISIENNQQLSLINYLINPNNNIQKEFTINNNKVYYERYCRRSNNIKSIFQSKSFETNKDNLYIQLNSNLEYQLYSKKAKLNSNEVEIEVKATGINYKDYLMYIGMIGSDLDIKYGKEYEIENGIGIDNPNIGNDFSGIITRLGNNVKKFKVGDQVCGIGSKASSSHVIVDFTSIYYKPLNYSHSVSASIPSIYITSLHSIYSIGNLKSNESILIHSAAGGIGISSLDLLKSKQHQGYIFLTVSSKDKEEYLIKKYGSLITAIYSSRNKNYVKDIKNKLMELGEVEQQGVDLILNTLSSEYMDSNFQCLNLSGRIVDLSITHLTPNDYMTNNHFKFNMTYSNVEVVDFTSKLIKSYLKKIIKMINSNKLELSVPIIEYSNNQFKDAIEYINQRKHIGKIIVNHNQDEFNRVYNNYQSNNNHIIMKHLYDISKLNIGKNILLTGQTGIVLEILKYLVKYSNHSIENIIILSKSKLKWELELLINQSKFKKDNNIKFHFNQIDIEDSNKVNQVLNQLELNENITNIDSIIHFAFMNDIGDVQQVDMNRLNNTHGAKTIGAINLHNQSINRSWNIKQFIMASSVVSIFGSDQQCCYVSACSVIDSLSKYRHSIGLPSLAINLGAISSTGFVSRNNAIETMFKSSIFNLFSPQLVISSLDLFIQNQHQYPNYCLSDFNFEVLPSTLTNQYHSKFDFEINIVKKSNQMKSFTGGNGDNNEIIRSTILNKISELLSIDESKINEDLQLTQYGMDSLVIVQLKNFIDNQLGHNIITIQQLQNNKINQSIEIIKSAHNNNNNNNNNNNNNNNNNNNNNNLVKKEQQSLDEFIKNETKLNESIISRPYSIKNILNNNNNSKSIFLTGSTGFLGAYLLTELIKMNNISKIYCLIRNNSKLTNPIDVIINNLKKHQLINMNKGSPNQRLNSNIESGDNSDNNSQISEDQLIKIIPTIGDISKDNFGLTEQDYLKLSNECDIIINSAADLDLKSNYEESKTVNVNNVNQVIKLSVSNNSSQKLIVHFSSLAVFINHPFKDEEDFEETNLVPSYNSTPIGYVQSKVISEKLLTNAAESRGIPSIIIRPPDIFSNPITGIGHSNDFISLLIKSSKEIGYYPNIHKSVFTTPVTTIAKTTIDLIFNENSWNQNKSKPISIYNFNGDSIEMKSFYRVLENSFKCKEIDFYEWIELVSKSNGKSSKRYSTFHIHKNQNLLLTSFKINSLFKMSNSTKELLISIGSYNHQDWEINESMIFNDIINNH.

One can recognise a Ketosynthase family 3 (KS3) domain in the interval 28-462 (SGDVAVIGIG…GSNVCLILSE (435 aa)). Active-site for beta-ketoacyl synthase activity residues include cysteine 200, histidine 339, and histidine 385. The interval 665–698 (GVSADIIIGHSLGEISSSYCSGIIDFQTLCYLTY) is acyl/malonyl transferase. Serine 675 (for acyl/malonyl transferase activity) is an active-site residue. The N-terminal hotdog fold stretch occupies residues 954 to 1083 (HEKIKNEGPS…GNFSLTKHNI (130 aa)). The region spanning 954–1264 (HEKIKNEGPS…CTIVGSNPDS (311 aa)) is the PKS/mFAS DH domain. The active-site Proton acceptor; for dehydratase activity is histidine 995. The C-terminal hotdog fold stretch occupies residues 1099–1264 (NFTSISKQDL…CTIVGSNPDS (166 aa)). The active-site Proton donor; for dehydratase activity is aspartate 1171. The segment at 1375 to 1396 (NINNNNNNNNNNNNNNNNNSNG) is disordered. Residues 2541-2618 (DNNEIIRSTI…QSIEIIKSAH (78 aa)) enclose the Carrier domain. Serine 2578 carries the O-(pantetheine 4'-phosphoryl)serine modification. 2 disordered regions span residues 2617-2640 (AHNN…NNNN) and 2739-2761 (NKGS…DNNS). The span at 2619-2640 (NNNNNNNNNNNNNNNNNNNNNN) shows a compositional bias: low complexity. Residues 2621 to 2652 (NNNNNNNNNNNNNNNNNNNNLVKKEQQSLDEF) adopt a coiled-coil conformation.

Pantetheine 4'-phosphate is required as a cofactor.

Its function is as follows. Probable polyketide synthase. The sequence is that of Probable polyketide synthase 34 (pks34) from Dictyostelium discoideum (Social amoeba).